The chain runs to 698 residues: Interleukin enhancer-binding factor 3 (698 aa).

The DZF domain occupies Arg5–Gly379. Disordered regions lie at residues Gln51–Thr88, Pro374–Ala403, and Glu473–Lys522. The segment covering Glu61–Thr71 has biased composition (acidic residues). Composition is skewed to basic and acidic residues over residues Glu72–Thr81 and Pro374–Pro384. Residues Lys372–Lys390 carry the Bipartite nuclear localization signal motif. A DRBM 1 domain is found at Glu399–Leu468. A compositionally biased stretch (polar residues) spans Thr490 to Ala503. The 67-residue stretch at His520–Pro586 folds into the DRBM 2 domain.

A component of a ybx2/frgy2-containing mRNA-ribonucleoprotein (mRNP) complex. Also a component of the CCAAT box transcription factor (CBTF) complex. In terms of processing, phosphorylated. Phosphorylation affects nuclear translocation. Methylated by protein arginine N-methyltransferase 1 (prmt1b) in the RGG-rich domain. Methylation decreases DNA-binding and thereby decreases transcription of the gata2 gene, but does not regulate dsRNA binding or subcellular localization.

The protein resides in the nucleus. Its subcellular location is the cytoplasm. In terms of biological role, RNA-binding protein that plays an essential role in the biogenesis of circular RNAs (circRNAs) which are produced by back-splicing circularization of pre-mRNAs. Within the nucleus, promotes circRNAs processing by stabilizing the regulatory elements residing in the flanking introns of the circularized exons. Plays thereby a role in the back-splicing of a subset of circRNAs. As a consequence, participates in a wide range of transcriptional and post-transcriptional processes. Binds to poly-U elements and AU-rich elements (AREs) in the 3'-UTR of target mRNAs. Upon viral infection, ILF3 accumulates in the cytoplasm and participates in the innate antiviral response. Mechanistically, ILF3 becomes phosphorylated and activated by the double-stranded RNA-activated protein kinase/PKR which releases ILF3 from cellular mature circRNAs. In turn, unbound ILF3 molecules are able to interact with and thus inhibit viral mRNAs. Has a cytoplasmic role early in development as part of a ribonucleoprotein (mRNP) complex which may regulate mRNA transport and/or translation. Following nuclear localization at the mid-blastula transition, acts as a transcription factor and binds the 5'-CCAAT-3' promoter sequence to regulate transcription of the gata2 gene as a subunit of the CCAAT box transcription factor (CBTF). Its role as an mRNP component negatively regulates its activity as a transcription factor by precluding its nuclear localization. The sequence is that of Interleukin enhancer-binding factor 3 from Xenopus tropicalis (Western clawed frog).